Consider the following 238-residue polypeptide: Enolase-phosphatase E1 (238 aa).

Mg(2+)-binding residues include Asp-14 and Glu-16. Residues 128–129 and Lys-165 each bind substrate; that span reads SS. Asp-192 lines the Mg(2+) pocket.

It belongs to the HAD-like hydrolase superfamily. MasA/MtnC family. Monomer. Requires Mg(2+) as cofactor.

The protein localises to the cytoplasm. It is found in the nucleus. It carries out the reaction 5-methylsulfanyl-2,3-dioxopentyl phosphate + H2O = 1,2-dihydroxy-5-(methylsulfanyl)pent-1-en-3-one + phosphate. The protein operates within amino-acid biosynthesis; L-methionine biosynthesis via salvage pathway; L-methionine from S-methyl-5-thio-alpha-D-ribose 1-phosphate: step 3/6. It participates in amino-acid biosynthesis; L-methionine biosynthesis via salvage pathway; L-methionine from S-methyl-5-thio-alpha-D-ribose 1-phosphate: step 4/6. Its function is as follows. Bifunctional enzyme that catalyzes the enolization of 2,3-diketo-5-methylthiopentyl-1-phosphate (DK-MTP-1-P) into the intermediate 2-hydroxy-3-keto-5-methylthiopentenyl-1-phosphate (HK-MTPenyl-1-P), which is then dephosphorylated to form the acireductone 1,2-dihydroxy-3-keto-5-methylthiopentene (DHK-MTPene). The protein is Enolase-phosphatase E1 of Fusarium vanettenii (strain ATCC MYA-4622 / CBS 123669 / FGSC 9596 / NRRL 45880 / 77-13-4) (Fusarium solani subsp. pisi).